Consider the following 321-residue polypeptide: MELPAMALQSELKQDKFPSSDVPVKDKTKKITWVRVWNSTDIFHIILVGGLHVLCLSAPFTFSWSAFWLSLTLYAVCGVFGTTLSYHRNLTHRSFKLPKYLEYFFAYVGLHALQGDPVWWVSTHRYHHKFTDTYLDPHSPIEGFWFSHIFWLFDSKYILEECGRYENAGDLLKQSYYRFLERTFVFHVYLQAALLYMFGGFPFIVWGMAVRTVWGFHASWLVNSVCHRYGHQAWDTGDLSTNNWFIAMLTSGEGWHNNHHAFEYSARHGIEWWQIDTTWYVIKLLEYLGLATDVKVPSEVHKRKMSFKNCVQDKQFCVNDK.

2 helical membrane passes run 42 to 62 and 64 to 84; these read IFHI…PFTF and WSAF…GTTL. Fe cation is bound by residues His-87, His-92, His-124, His-127, and His-128. The short motif at 87–92 is the Histidine box-1 element; sequence HRNLTH. The short motif at 124–128 is the Histidine box-2 element; the sequence is HRYHH. Residues 190 to 210 form a helical membrane-spanning segment; sequence LQAALLYMFGGFPFIVWGMAV. Fe cation is bound by residues His-227, His-256, His-259, and His-260. The Histidine box-3 motif lies at 256–260; it reads HNNHH.

Belongs to the fatty acid desaturase type 1 family. Fe(2+) serves as cofactor.

Its subcellular location is the membrane. The catalysed reaction is (11Z,14Z)-eicosadienoyl-CoA + AH2 + O2 = (5Z,11Z,14Z)-eicosatrienoyl-CoA + A + 2 H2O. It carries out the reaction (11Z,14Z,17Z)-eicosatrienoyl-CoA + AH2 + O2 = (5Z,11Z,14Z,17Z)-eicosatetraenoyl-CoA + A + 2 H2O. It participates in lipid metabolism; polyunsaturated fatty acid biosynthesis. Functionally, catalyzes the desaturation of 20:2Delta(11,14) and 20:3Delta(11,14,17) to generate sciadonic acid (20:3Delta(5,11,14)) and juniperonic acid (20:4Delta(5,11,14,17)). The enzyme can also use 16:0 and 18:0 as substrates. The polypeptide is Acyl-CoA 5-desaturase AL21 (Anemone leveillei (Windflower)).